The following is a 1487-amino-acid chain: Secretory phospholipase A2 receptor (1487 aa).

An N-terminal signal peptide occupies residues 1–26; it reads MVQWLAMLQLLWLQQLLLLGIHQGIA. Residues 27–1396 lie on the Extracellular side of the membrane; that stretch reads QDLTHIQEPS…AQPEKGLSHS (1370 aa). The 124-residue stretch at 42 to 165 folds into the Ricin B-type lectin domain; the sequence is KGIFIIQSES…SSGGDICEHP (124 aa). 4 cysteine pairs are disulfide-bonded: Cys55–Cys68, Cys93–Cys110, Cys181–Cys207, and Cys195–Cys222. Asn97 is a glycosylation site (N-linked (GlcNAc...) asparagine). The region spanning 176–224 is the Fibronectin type-II domain; the sequence is AHGMPCVFPFQFKGHWHHDCIREGQKEHLLWCATTSRYEEDEKWGFCPD. A glycan (N-linked (GlcNAc...) asparagine) is linked at Asn239. C-type lectin domains are found at residues 241-357, 387-504, 524-643, 673-797, 819-938, and 964-1095; these read SSRI…YICK, FNRK…YICK, HGRF…MSLC, GLAS…WICR, YQNA…SICK, and FNYK…GFVC. 10 disulfides stabilise this stretch: Cys263/Cys356, Cys333/Cys348, Cys408/Cys503, Cys480/Cys495, Cys617/Cys634, Cys699/Cys796, Cys774/Cys788, Cys840/Cys937, Cys914/Cys929, and Cys1066/Cys1086. Asn928 carries N-linked (GlcNAc...) asparagine glycosylation. N-linked (GlcNAc...) asparagine glycosylation is found at Asn1107, Asn1122, and Asn1131. 2 consecutive C-type lectin domains span residues 1120-1231 and 1256-1377; these read YGNR…GAIC and FKGN…FICK. Disulfide bonds link Cys1208/Cys1222, Cys1279/Cys1376, and Cys1353/Cys1368. The chain crosses the membrane as a helical span at residues 1397 to 1417; that stretch reads IVPVTVTLTLIIALGIFMLCF. Over 1418-1487 the chain is Cytoplasmic; the sequence is WIYKQKSDIF…HKGRPICISP (70 aa). Residues 1435-1441 carry the Endocytosis signal motif; that stretch reads GSYYPTL. A compositionally biased stretch (basic and acidic residues) spans 1463-1475; that stretch reads DEEVRDAPATESK. The segment at 1463 to 1487 is disordered; it reads DEEVRDAPATESKRGHKGRPICISP.

As to quaternary structure, interacts with sPLA2-IB/PLA2G1B; this interaction mediates intracellular signaling as well as clearance of extracellular sPLA2-IB/PLA2G1B via endocytotic pathway. Interacts with sPLA2-X/PLA2G10; this interaction mediates sPLA2-X/PLA2G10 clearance and inactivation. Post-translationally, the secretory phospholipase A2 receptor form may be produced by the action of metalloproteinases. It contains all extracellular domains and only lacks transmembrane and cytosolic regions. It is however unclear whether this form is produced by proteolytic cleavage as suggested by some experiments reported by PubMed:11830583, or by alternative splicing. In terms of tissue distribution, widely expressed. Present in type II alveolar epithelial cells and a subset of splenic lymphocytes. Present at the surface of polymorphonuclear neutrophils (at protein level).

Its subcellular location is the cell membrane. The protein localises to the secreted. Its function is as follows. Receptor for secretory phospholipase A2 (sPLA2). Acts as a receptor for phospholipases sPLA2-IB/PLA2G1B, sPLA2-X/PLA2G10 and, with lower affinity, sPLA2-IIA/PLA2G2A. Also able to bind to snake PA2-like toxins. Although its precise function remains unclear, binding of sPLA2 to its receptor participates in both positive and negative regulation of sPLA2 functions as well as clearance of sPLA2. Binding of sPLA2-IB/PLA2G1B induces various effects depending on the cell type, such as activation of the mitogen-activated protein kinase (MAPK) cascade to induce cell proliferation, the production of lipid mediators, selective release of arachidonic acid in bone marrow-derived mast cells. In neutrophils, binding of sPLA2-IB/PLA2G1B can activate p38 MAPK to stimulate elastase release and cell adhesion. May be involved in responses in pro-inflammatory cytokine productions during endotoxic shock. Also has endocytic properties and rapidly internalizes sPLA2 ligands, which is particularly important for the clearance of extracellular sPLA2s to protect their potent enzymatic activities. The soluble secretory phospholipase A2 receptor form is circulating and acts as a negative regulator of sPLA2 functions by blocking the biological functions of sPLA2-IB/PLA2G1B and sPLA2-X/PLA2G10. In podocytes, binding of sPLA2-IB/PLA2G1B can regulate podocyte survival and glomerular homeostasis. In Mus musculus (Mouse), this protein is Secretory phospholipase A2 receptor (Pla2r1).